A 75-amino-acid chain; its full sequence is DNA-directed RNA polymerase subunit Rpo5 (75 aa).

Belongs to the archaeal Rpo5/eukaryotic RPB5 RNA polymerase subunit family. In terms of assembly, part of the RNA polymerase complex.

The protein resides in the cytoplasm. The enzyme catalyses RNA(n) + a ribonucleoside 5'-triphosphate = RNA(n+1) + diphosphate. DNA-dependent RNA polymerase (RNAP) catalyzes the transcription of DNA into RNA using the four ribonucleoside triphosphates as substrates. The protein is DNA-directed RNA polymerase subunit Rpo5 of Halobacterium salinarum (strain ATCC 700922 / JCM 11081 / NRC-1) (Halobacterium halobium).